A 430-amino-acid polypeptide reads, in one-letter code: MSKLKKVIGDVDVNKGLLFLLTIGGLYSLGIALSNTFVNVYLWKQSGKFIDLAIYNLSIVTMQPITFYLAGRLAKKIDRVFILRFGVIFLAAFYLSVLLAGETAASRLVLIGAVLGVGYGFYWLAFNVLTFEITEPDTRDFFNGFMGILSSSAGMIGPIVAGFVISRLENNTGYTVIFSLSLSLFALAVVMSFFLKRRESKGRFMLSKVFGERHSNMNWRRITNAHFFQGLREGIFVFLISVFVFIETNSELALGTFGLVNSAVSFFAYYFASRLIKKKARKKSILLGGLILYGALFLILFHMSFSTLLTYGVFIAIGYPLLLVPYVSLTYDVIGRARHARKARIEYIVLREMFLNAGRIVSILCFLLIVALLKEDVGIPLSLAILGIGHPLIYYFVKDIRFKEKEGENETMEEDGQKRVTEPTLLKGER.

Transmembrane regions (helical) follow at residues 18 to 38 (LFLL…NTFV), 49 to 69 (FIDL…TFYL), 80 to 100 (VFIL…VLLA), 109 to 129 (VLIG…FNVL), 145 to 165 (FMGI…GFVI), 175 to 195 (TVIF…SFFL), 235 to 255 (IFVF…LALG), 256 to 276 (TFGL…SRLI), 285 to 305 (ILLG…HMSF), 307 to 327 (TLLT…VPYV), 353 to 373 (MFLN…VALL), and 377 to 397 (VGIP…YYFV). A disordered region spans residues 407 to 430 (GENETMEEDGQKRVTEPTLLKGER). Residues 415-430 (DGQKRVTEPTLLKGER) are compositionally biased toward basic and acidic residues.

It is found in the cell membrane. This is an uncharacterized protein from Bacillus subtilis (strain 168).